The following is a 257-amino-acid chain: UPF0246 protein YaaA (257 aa).

Belongs to the UPF0246 family.

The polypeptide is UPF0246 protein YaaA (Salmonella choleraesuis (strain SC-B67)).